Consider the following 184-residue polypeptide: Photosystem I assembly protein Ycf4 (184 aa).

2 helical membrane passes run 25–45 (ACILFFGSLGFFLVGISSYLG) and 57–77 (ILFVPQGIVMCFYGIAGLFIS).

This sequence belongs to the Ycf4 family.

It is found in the plastid. The protein localises to the chloroplast thylakoid membrane. In terms of biological role, seems to be required for the assembly of the photosystem I complex. The polypeptide is Photosystem I assembly protein Ycf4 (Cycas taitungensis (Prince sago)).